Consider the following 175-residue polypeptide: Bcl-2-related protein A1 (175 aa).

The BH1 signature appears at 77 to 97; the sequence is KEFEDGIINWGRIVTIFAFEG. A BH2 motif is present at residues 132-147; the sequence is EWIRQNGGWENGFVKK.

The protein belongs to the Bcl-2 family. In terms of assembly, interacts directly with BAK1, BID, BMF and BBC3. Interacts directly with BCL2L11/BIM. Interacts with BAX isoform Sigma. Interacts directly with PMAIP1. Interacts with RTL10/BOP. Interacts with ING4. Interacts with UBQLN4. In terms of tissue distribution, seems to be restricted to the hematopoietic compartment. Expressed in peripheral blood, spleen, and bone marrow, at moderate levels in lung, small intestine and testis, at a minimal levels in other tissues. Also found in vascular smooth muscle cells and hematopoietic malignancies.

Its subcellular location is the cytoplasm. In terms of biological role, retards apoptosis induced by IL-3 deprivation. May function in the response of hemopoietic cells to external signals and in maintaining endothelial survival during infection. Can inhibit apoptosis induced by serum starvation in the mammary epithelial cell line HC11. The polypeptide is Bcl-2-related protein A1 (BCL2A1) (Homo sapiens (Human)).